The following is a 147-amino-acid chain: METLIAISRWLAKQHVVTWCVQQEGELWCANAFYLFDAQKVAFYILTEEKTRHAQMSGPQAAVAGTVNGQPKTVALIRGVQFKGEIRRLEGEESDLARKAYNRRFPVARMLSAPVWEIRLDEIKFTDNTLGFGKKMIWLRDSGTEQA.

It belongs to the UPF0306 family.

The protein is UPF0306 protein YhbP of Escherichia coli (strain K12 / MC4100 / BW2952).